The chain runs to 24 residues: Acetylcholine receptor subunit alpha (24 aa).

It belongs to the ligand-gated ion channel (TC 1.A.9) family. Acetylcholine receptor (TC 1.A.9.1) subfamily. Alpha-1/CHRNA1 sub-subfamily. In terms of assembly, one of the alpha chains that assemble within the acetylcholine receptor, a pentamer of two alpha chains, a beta, a delta, and a gamma or epsilon chains.

The protein localises to the postsynaptic cell membrane. The protein resides in the cell membrane. It catalyses the reaction K(+)(in) = K(+)(out). It carries out the reaction Na(+)(in) = Na(+)(out). In terms of biological role, upon acetylcholine binding, the AChR responds by an extensive change in conformation that affects all subunits and leads to opening of an ion-conducting channel across the plasma membrane. This Electrophorus electricus (Electric eel) protein is Acetylcholine receptor subunit alpha (chrna1).